We begin with the raw amino-acid sequence, 242 residues long: Large ribosomal subunit protein uL2 (242 aa).

Positions 201-242 (VDHPFGGGRHQHTGKPTTVSRKKVPPGRKVGHISARRTGVRK) are disordered. A compositionally biased stretch (basic residues) spans 220–242 (SRKKVPPGRKVGHISARRTGVRK).

This sequence belongs to the universal ribosomal protein uL2 family. As to quaternary structure, part of the 50S ribosomal subunit. Forms a bridge to the 30S subunit in the 70S ribosome.

Its function is as follows. One of the primary rRNA binding proteins. Required for association of the 30S and 50S subunits to form the 70S ribosome, for tRNA binding and peptide bond formation. It has been suggested to have peptidyltransferase activity; this is somewhat controversial. Makes several contacts with the 16S rRNA in the 70S ribosome. This Methanocaldococcus jannaschii (strain ATCC 43067 / DSM 2661 / JAL-1 / JCM 10045 / NBRC 100440) (Methanococcus jannaschii) protein is Large ribosomal subunit protein uL2.